Reading from the N-terminus, the 338-residue chain is MDQIKKIIDNFKQTISSVDNQKELIVTKNIFVKKHVTPLFQQLRELEELAVKKAFGKELNFLQEAIQELFEEKNQQLVINLDQNQKPAYDLMIPALDLVDGSIHPLNLVVNQIVDFFKKFNFTIVNYPELVTTKHCFDDLNIPLDHPGRSKTDTFYVSDKQLLRTHCTAGTIEAIAAMNKHKDIRVISFGNVYRNDTDDATHSHQFMQMDFMWVNKDLSLSNLKWFVTKFIEHMFGNDLKTRFRLSHFPFTEPSFEVDVECWNCQSGCFLCKKTRWIEIMGSGILHPKVLEAAHIDPEKMVGIAAGIGIERIAMLKNNITDIRDFYFNDFRFIKQFYE.

A Mg(2+)-binding site is contributed by glutamate 252.

This sequence belongs to the class-II aminoacyl-tRNA synthetase family. Phe-tRNA synthetase alpha subunit type 1 subfamily. As to quaternary structure, tetramer of two alpha and two beta subunits. The cofactor is Mg(2+).

The protein localises to the cytoplasm. It carries out the reaction tRNA(Phe) + L-phenylalanine + ATP = L-phenylalanyl-tRNA(Phe) + AMP + diphosphate + H(+). The sequence is that of Phenylalanine--tRNA ligase alpha subunit from Mycoplasmoides gallisepticum (strain R(low / passage 15 / clone 2)) (Mycoplasma gallisepticum).